Reading from the N-terminus, the 118-residue chain is Large ribosomal subunit protein eL18 (118 aa).

This sequence belongs to the eukaryotic ribosomal protein eL18 family.

This chain is Large ribosomal subunit protein eL18, found in Nanoarchaeum equitans (strain Kin4-M).